The sequence spans 615 residues: 3-(3-hydroxy-phenyl)propionate/3-hydroxycinnamic acid hydroxylase 1 (615 aa).

Positions 1–20 (MRPAFEPAAGLGRAHPHETT) are disordered. Residues 27 to 56 (DVAI…VVEK) and 294 to 304 (FRVKRILLAGD) each bind FAD.

It belongs to the PheA/TfdB FAD monooxygenase family. The cofactor is FAD.

The enzyme catalyses 3-(3-hydroxyphenyl)propanoate + NADH + O2 + H(+) = 3-(2,3-dihydroxyphenyl)propanoate + NAD(+) + H2O. It carries out the reaction (2E)-3-(3-hydroxyphenyl)prop-2-enoate + NADH + O2 + H(+) = (2E)-3-(2,3-dihydroxyphenyl)prop-2-enoate + NAD(+) + H2O. The protein operates within aromatic compound metabolism; 3-phenylpropanoate degradation. Catalyzes the insertion of one atom of molecular oxygen into position 2 of the phenyl ring of 3-(3-hydroxyphenyl)propionate (3-HPP) and hydroxycinnamic acid (3HCI). In Burkholderia vietnamiensis (strain G4 / LMG 22486) (Burkholderia cepacia (strain R1808)), this protein is 3-(3-hydroxy-phenyl)propionate/3-hydroxycinnamic acid hydroxylase 1.